We begin with the raw amino-acid sequence, 122 residues long: Small ribosomal subunit protein uS13 (122 aa).

Positions 95–122 are disordered; that stretch reads GLPVRGQRTKTNSRTRKGRRKTVANKKK. Residues 101–122 show a composition bias toward basic residues; sequence QRTKTNSRTRKGRRKTVANKKK.

It belongs to the universal ribosomal protein uS13 family. Part of the 30S ribosomal subunit. Forms a loose heterodimer with protein S19. Forms two bridges to the 50S subunit in the 70S ribosome.

Functionally, located at the top of the head of the 30S subunit, it contacts several helices of the 16S rRNA. In the 70S ribosome it contacts the 23S rRNA (bridge B1a) and protein L5 of the 50S subunit (bridge B1b), connecting the 2 subunits; these bridges are implicated in subunit movement. Contacts the tRNAs in the A and P-sites. The polypeptide is Small ribosomal subunit protein uS13 (Protochlamydia amoebophila (strain UWE25)).